The sequence spans 129 residues: Follitropin subunit beta (129 aa).

Positions 1 to 19 are cleaved as a signal peptide; that stretch reads MKSVQFCFLFCCWRAICCR. Disulfide bonds link Cys-21-Cys-69, Cys-35-Cys-84, Cys-38-Cys-122, Cys-46-Cys-100, Cys-50-Cys-102, and Cys-105-Cys-112. N-linked (GlcNAc...) asparagine glycosylation is found at Asn-25 and Asn-42.

This sequence belongs to the glycoprotein hormones subunit beta family. As to quaternary structure, heterodimer. The active follitropin is a heterodimer composed of an alpha chain/CGA shared with other hormones and a unique beta chain/FSHB shown here.

It localises to the secreted. In terms of biological role, together with the alpha chain CGA constitutes follitropin, the follicle-stimulating hormone, and provides its biological specificity to the hormone heterodimer. Binds FSHR, a G protein-coupled receptor, on target cells to activate downstream signaling pathways. Follitropin is involved in follicle development and spermatogenesis in reproductive organs. The protein is Follitropin subunit beta (FSHB) of Ovis aries (Sheep).